We begin with the raw amino-acid sequence, 935 residues long: MTELKAKGLRAPHVAGSPSSPKVGSPLPCRQATGQFPGSQTSDTLPEVSALPISLDGLLFPRICQAQDPPDEKTQDQQSLSDVEGAYSRVEATRGAGGSSSRPPEKDSGLLDSVLDTLWAPSGPGQSQPSPPACEVTSSWCLFGPELPEDPPAAPATQRVLSPLMSRSGGKAGDSSGMAAAHKVLPRGLSPSRQLLLPTSGSPHWSGAPVKPSPQPAAVEVEEEDGSESEDSAGLLLKGKPRALGGAAAGGGAPAVTPGTAAGGIALVPKEDSRFSAPRVALVEQDAPMAPGRSPLATTVTDFIHVPILPLSHALLAARTRQLLEDESYDGGSGAASAFAPPRSSPSASSTPVPGSDFPDCAYAPDAEPKDDVYPLYGDFQPPALKIKEEEEGAEASTRSPRSYLVAGASPTTFPDFPLGPPPPLPPRAPPSRPGEAAVTAAPASASVSSASSSGSTLECILYKAEGAQPQQGPFAPPPCKAPGAGGCLLPRDSLPSTSASAGATAAGAAPALYPALGLNGLPQLGYQAAVIKEGLPQVYPPYLNYLRPDSETSQSPQYSFESLPQKICLICGDEASGCHYGVLTCGSCKVFFKRAMEGQHNYLCAGRNDCIVDKIRRKNCPACRLRKCCQAGMVLGGRKFKKFNKVRVMRALDAVALPQPVGIPNENQALSQRFTFSPSQDIQLIPPLINLLLSIEPDVIYAGHDNTKPDTSSSLLTSLNQLGERQLLSVVKWSKSLPGFRNLHIDDQITLIQYSWMSLMVFGLGWRSYKHVSGQMLYFAPDLILNEQRMKESSFYSLCLTMWQIPQEFVKLQVSQEEFLCMKVLLLLNTIPLEGLRSQTQFEEMRSSYIRELIKAIGLRQKGVVSSSQRFYQLTKLLDNLHDLVKQLHLYCLNTFIQSRALSVEFPEMMSEVIAAQLPKILAGMVKPLLFHKK.

The tract at residues 1–49 (MTELKAKGLRAPHVAGSPSSPKVGSPLPCRQATGQFPGSQTSDTLPEVS) is disordered. The interval 1-164 (MTELKAKGLR…PATQRVLSPL (164 aa)) is AF3; mediates transcriptional activation. The tract at residues 1–568 (MTELKAKGLR…YSFESLPQKI (568 aa)) is modulating, Pro-Rich. Phosphoserine is present on S20. Polar residues predominate over residues 32–44 (ATGQFPGSQTSDT). Residues 55–59 (LDGLL) carry the LXXL motif 1 motif. The segment at 62–158 (RICQAQDPPD…EDPPAAPATQ (97 aa)) is disordered. Residue S81 is modified to Phosphoserine. Positions 115–119 (LDTLW) match the LXXL motif 2 motif. Phosphoserine occurs at positions 130 and 162. Residues 165–305 (MSRSGGKAGD…LATTVTDFIH (141 aa)) are mediates transcriptional transrepression. The short motif at 183 to 187 (KVLPR) is the Nuclear localization signal element. Positions 187 to 233 (RGLSPSRQLLLPTSGSPHWSGAPVKPSPQPAAVEVEEEDGSESEDSA) are disordered. At S190 the chain carries Phosphoserine. Positions 191–203 (PSRQLLLPTSGSP) are enriched in polar residues. S213 is subject to Phosphoserine. Residues 220-231 (EVEEEDGSESED) are compositionally biased toward acidic residues. S294 is modified (phosphoserine; by MAPK1). The interval 328-365 (SYDGGSGAASAFAPPRSSPSASSTPVPGSDFPDCAYAP) is disordered. The span at 335-356 (AASAFAPPRSSPSASSTPVPGS) shows a compositional bias: low complexity. S345 carries the post-translational modification Phosphoserine; by MAPK. K388 participates in a covalent cross-link: Glycyl lysine isopeptide (Lys-Gly) (interchain with G-Cter in SUMO); alternate. K388 is covalently cross-linked (Glycyl lysine isopeptide (Lys-Gly) (interchain with G-Cter in ubiquitin); alternate). The tract at residues 390–452 (EEEGAEASTR…PASASVSSAS (63 aa)) is disordered. A Phosphoserine; by CDK2 modification is found at S400. Over residues 418-433 (PLGPPPPLPPRAPPSR) the composition is skewed to pro residues. The span at 434 to 452 (PGEAAVTAAPASASVSSAS) shows a compositional bias: low complexity. Positions 456-548 (STLECILYKA…VYPPYLNYLR (93 aa)) are AF1; mediates transcriptional activation. K533 is covalently cross-linked (Glycyl lysine isopeptide (Lys-Gly) (interchain with G-Cter in SUMO)). 2 consecutive NR C4-type zinc fingers follow at residues 569 to 589 (CLIC…CGSC) and 605 to 629 (CAGR…LRKC). Positions 569-641 (CLICGDEASG…AGMVLGGRKF (73 aa)) form a DNA-binding region, nuclear receptor. Residue S678 is modified to Phosphoserine. One can recognise an NR LBD domain in the interval 681 to 915 (QDIQLIPPLI…EFPEMMSEVI (235 aa)). The segment at 689 to 935 (LINLLLSIEP…MVKPLLFHKK (247 aa)) is AF2; mediates transcriptional activation. Residue R768 participates in progesterone binding.

The protein belongs to the nuclear hormone receptor family. Interacts with SMARD1 and UNC45A. Interacts with CUEDC2; the interaction promotes ubiquitination, decreases sumoylation, and represses transcriptional activity. Interacts with PIAS3; the interaction promotes sumoylation of PR in a hormone-dependent manner, inhibits DNA-binding, and alters nuclear export. Interacts with SP1; the interaction requires ligand-induced phosphorylation on Ser-345 by ERK1/2-MAPK. Interacts with PRMT2. Interacts with NCOA2 and NCOA1. Interacts with KLF9. Interacts with GTF2B. Post-translationally, phosphorylated on multiple serine sites. Several of these sites are hormone-dependent. Phosphorylation on Ser-294 is highly hormone-dependent and modulates ubiquitination and sumoylation on Lys-388. Phosphorylation on Ser-345 also requires induction by hormone. Basal phosphorylation on Ser-81, Ser-162, Ser-190 and Ser-400 is increased in response to progesterone and can be phosphorylated in vitro by the CDK2-A1 complex. Increased levels of phosphorylation on Ser-400 also in the presence of EGF, heregulin, IGF, PMA and FBS. Phosphorylation at this site by CDK2 is ligand-independent, and increases nuclear translocation and transcriptional activity. Phosphorylation at Ser-162 and Ser-294, but not at Ser-190, is impaired during the G(2)/M phase of the cell cycle. Phosphorylation on Ser-345 by ERK1/2 MAPK is required for interaction with SP1. Sumoylation is hormone-dependent and represses transcriptional activity. Sumoylation on all three sites is enhanced by PIAS3. Desumoylated by SENP1. Sumoylation on Lys-388, the main site of sumoylation, is repressed by ubiquitination on the same site, and modulated by phosphorylation at Ser-294. In terms of processing, ubiquitination is hormone-dependent and represses sumoylation on the same site. Promoted by MAPK-mediated phosphorylation on Ser-294. Ubiquitinated by UBR5, leading to its degradation: UBR5 specifically recognizes and binds ligand-bound PGR when it is not associated with coactivators (NCOAs). In presence of NCOAs, the UBR5-degron is not accessible, preventing its ubiquitination and degradation. Post-translationally, palmitoylated by ZDHHC7 and ZDHHC21. Palmitoylation is required for plasma membrane targeting and for rapid intracellular signaling via ERK and AKT kinases and cAMP generation.

Its subcellular location is the nucleus. The protein localises to the cytoplasm. The steroid hormones and their receptors are involved in the regulation of eukaryotic gene expression and affect cellular proliferation and differentiation in target tissues. Transcriptional activator of several progesteron-dependent promoters in a variety of cell types. Involved in activation of SRC-dependent MAPK signaling on hormone stimulation. The chain is Progesterone receptor (PGR) from Sapajus apella (Brown-capped capuchin).